The following is a 173-amino-acid chain: Translation initiation factor IF-3 (173 aa).

It belongs to the IF-3 family. As to quaternary structure, monomer.

The protein resides in the cytoplasm. Functionally, IF-3 binds to the 30S ribosomal subunit and shifts the equilibrium between 70S ribosomes and their 50S and 30S subunits in favor of the free subunits, thus enhancing the availability of 30S subunits on which protein synthesis initiation begins. In Campylobacter lari (strain RM2100 / D67 / ATCC BAA-1060), this protein is Translation initiation factor IF-3.